The following is a 437-amino-acid chain: Purple acid phosphatase 18 (437 aa).

An N-terminal signal peptide occupies residues M1–A23. Fe cation-binding residues include D148, D175, and Y178. Zn(2+) is bound at residue D175. 2 residues coordinate Zn(2+): N208 and H291. Position 208 (N208) interacts with substrate. H301 acts as the Proton donor in catalysis. H328 serves as a coordination point for Zn(2+). H328 to H330 contacts substrate. Fe cation is bound at residue H330. The N-linked (GlcNAc...) asparagine glycan is linked to N390.

This sequence belongs to the metallophosphoesterase superfamily. Purple acid phosphatase family. Homodimer. The cofactor is Fe cation. It depends on Zn(2+) as a cofactor. In terms of tissue distribution, expressed in roots, stems, leaves, flowers and siliques.

The protein localises to the secreted. It carries out the reaction a phosphate monoester + H2O = an alcohol + phosphate. This is Purple acid phosphatase 18 (PAP18) from Arabidopsis thaliana (Mouse-ear cress).